Reading from the N-terminus, the 147-residue chain is Transthyretin (147 aa).

A signal peptide spans 1–20; sequence MASHRLLLLCLAGLVFVSEA. C30 carries the post-translational modification Sulfocysteine. K35 is an L-thyroxine binding site. Residue S72 is modified to Phosphoserine. Residue E74 participates in L-thyroxine binding. N118 carries N-linked (GlcNAc...) asparagine glycosylation. S137 is a binding site for L-thyroxine.

The protein belongs to the transthyretin family. Homotetramer. Dimer of dimers. In the homotetramer, subunits assemble around a central channel that can accommodate two ligand molecules. Interacts with RBP4. In terms of processing, sulfonation of the reactive cysteine Cys-30 enhances the stability of the native conformation of TTR, avoiding misassembly of the protein leading to amyloid formation.

Its subcellular location is the secreted. In terms of biological role, thyroid hormone-binding protein. Probably transports thyroxine from the bloodstream to the brain. This is Transthyretin (TTR) from Macaca fascicularis (Crab-eating macaque).